The chain runs to 496 residues: Glutamyl-tRNA(Gln) amidotransferase subunit B, organellar chromatophore (496 aa).

Belongs to the GatB/GatE family. GatB subfamily. Subunit of the heterotrimeric GatCAB amidotransferase (AdT) complex, composed of A, B and C subunits.

The protein resides in the plastid. The protein localises to the organellar chromatophore. It carries out the reaction L-glutamyl-tRNA(Gln) + L-glutamine + ATP + H2O = L-glutaminyl-tRNA(Gln) + L-glutamate + ADP + phosphate + H(+). Allows the formation of correctly charged Gln-tRNA(Gln) through the transamidation of misacylated Glu-tRNA(Gln). The reaction takes place in the presence of glutamine and ATP through an activated gamma-phospho-Glu-tRNA(Gln). The sequence is that of Glutamyl-tRNA(Gln) amidotransferase subunit B, organellar chromatophore from Paulinella chromatophora.